A 355-amino-acid chain; its full sequence is Holliday junction branch migration complex subunit RuvB (355 aa).

Residues 4 to 190 (TDKLAAERII…FGIVARLEFY (187 aa)) form a large ATPase domain (RuvB-L) region. Residues Leu29, Arg30, Gly71, Lys74, Thr75, Thr76, 137–139 (EDY), Arg180, Tyr190, and Arg227 each bind ATP. Thr75 serves as a coordination point for Mg(2+). The tract at residues 191–261 (DADQLARIVR…VADAALAMLD (71 aa)) is small ATPAse domain (RuvB-S). The segment at 264 to 355 (PVGFDLMDRK…RGMWDTPAGK (92 aa)) is head domain (RuvB-H). Positions 300, 319, and 324 each coordinate DNA.

It belongs to the RuvB family. Homohexamer. Forms an RuvA(8)-RuvB(12)-Holliday junction (HJ) complex. HJ DNA is sandwiched between 2 RuvA tetramers; dsDNA enters through RuvA and exits via RuvB. An RuvB hexamer assembles on each DNA strand where it exits the tetramer. Each RuvB hexamer is contacted by two RuvA subunits (via domain III) on 2 adjacent RuvB subunits; this complex drives branch migration. In the full resolvosome a probable DNA-RuvA(4)-RuvB(12)-RuvC(2) complex forms which resolves the HJ.

It is found in the cytoplasm. It catalyses the reaction ATP + H2O = ADP + phosphate + H(+). In terms of biological role, the RuvA-RuvB-RuvC complex processes Holliday junction (HJ) DNA during genetic recombination and DNA repair, while the RuvA-RuvB complex plays an important role in the rescue of blocked DNA replication forks via replication fork reversal (RFR). RuvA specifically binds to HJ cruciform DNA, conferring on it an open structure. The RuvB hexamer acts as an ATP-dependent pump, pulling dsDNA into and through the RuvAB complex. RuvB forms 2 homohexamers on either side of HJ DNA bound by 1 or 2 RuvA tetramers; 4 subunits per hexamer contact DNA at a time. Coordinated motions by a converter formed by DNA-disengaged RuvB subunits stimulates ATP hydrolysis and nucleotide exchange. Immobilization of the converter enables RuvB to convert the ATP-contained energy into a lever motion, pulling 2 nucleotides of DNA out of the RuvA tetramer per ATP hydrolyzed, thus driving DNA branch migration. The RuvB motors rotate together with the DNA substrate, which together with the progressing nucleotide cycle form the mechanistic basis for DNA recombination by continuous HJ branch migration. Branch migration allows RuvC to scan DNA until it finds its consensus sequence, where it cleaves and resolves cruciform DNA. The chain is Holliday junction branch migration complex subunit RuvB from Burkholderia ambifaria (strain ATCC BAA-244 / DSM 16087 / CCUG 44356 / LMG 19182 / AMMD) (Burkholderia cepacia (strain AMMD)).